Here is a 307-residue protein sequence, read N- to C-terminus: Mycothiol acetyltransferase (307 aa).

N-acetyltransferase domains lie at 12-157 (TRTD…PPLP) and 160-307 (VTLR…YQLG). Glutamate 43 contacts 1D-myo-inositol 2-(L-cysteinylamino)-2-deoxy-alpha-D-glucopyranoside. Residue 87 to 89 (LAV) participates in acetyl-CoA binding. Residues glutamate 187, lysine 227, and glutamate 239 each contribute to the 1D-myo-inositol 2-(L-cysteinylamino)-2-deoxy-alpha-D-glucopyranoside site. Acetyl-CoA contacts are provided by residues 243-245 (LGV) and 250-256 (HGGGLGK). Residue tyrosine 278 participates in 1D-myo-inositol 2-(L-cysteinylamino)-2-deoxy-alpha-D-glucopyranoside binding.

Belongs to the acetyltransferase family. MshD subfamily. Monomer.

It catalyses the reaction 1D-myo-inositol 2-(L-cysteinylamino)-2-deoxy-alpha-D-glucopyranoside + acetyl-CoA = mycothiol + CoA + H(+). Its function is as follows. Catalyzes the transfer of acetyl from acetyl-CoA to desacetylmycothiol (Cys-GlcN-Ins) to form mycothiol. This is Mycothiol acetyltransferase from Salinispora tropica (strain ATCC BAA-916 / DSM 44818 / JCM 13857 / NBRC 105044 / CNB-440).